Reading from the N-terminus, the 379-residue chain is Beta sliding clamp (379 aa).

This sequence belongs to the beta sliding clamp family. In terms of assembly, forms a ring-shaped head-to-tail homodimer around DNA which binds and tethers DNA polymerases and other proteins to the DNA. The DNA replisome complex has a single clamp-loading complex (3 tau and 1 each of delta, delta', psi and chi subunits) which binds 3 Pol III cores (1 core on the leading strand and 2 on the lagging strand) each with a beta sliding clamp dimer. Additional proteins in the replisome are other copies of gamma, psi and chi, Ssb, DNA helicase and RNA primase.

It is found in the cytoplasm. Functionally, confers DNA tethering and processivity to DNA polymerases and other proteins. Acts as a clamp, forming a ring around DNA (a reaction catalyzed by the clamp-loading complex) which diffuses in an ATP-independent manner freely and bidirectionally along dsDNA. Initially characterized for its ability to contact the catalytic subunit of DNA polymerase III (Pol III), a complex, multichain enzyme responsible for most of the replicative synthesis in bacteria; Pol III exhibits 3'-5' exonuclease proofreading activity. The beta chain is required for initiation of replication as well as for processivity of DNA replication. The chain is Beta sliding clamp (dnaN) from Rickettsia bellii (strain RML369-C).